Reading from the N-terminus, the 96-residue chain is Putative septation protein SpoVG (96 aa).

The protein belongs to the SpoVG family.

In terms of biological role, essential for sporulation. Interferes with or is a negative regulator of the pathway leading to asymmetric septation. This is Putative septation protein SpoVG from Priestia megaterium (Bacillus megaterium).